We begin with the raw amino-acid sequence, 365 residues long: Phosphoserine aminotransferase (365 aa).

L-glutamate is bound at residue arginine 40. Pyridoxal 5'-phosphate is bound by residues 74–75, phenylalanine 99, threonine 155, aspartate 177, and glutamine 200; that span reads AS. Lysine 201 is modified (N6-(pyridoxal phosphate)lysine). A pyridoxal 5'-phosphate-binding site is contributed by 241–242; that stretch reads NT.

Belongs to the class-V pyridoxal-phosphate-dependent aminotransferase family. SerC subfamily. Homodimer. The cofactor is pyridoxal 5'-phosphate.

The protein resides in the cytoplasm. The enzyme catalyses O-phospho-L-serine + 2-oxoglutarate = 3-phosphooxypyruvate + L-glutamate. The catalysed reaction is 4-(phosphooxy)-L-threonine + 2-oxoglutarate = (R)-3-hydroxy-2-oxo-4-phosphooxybutanoate + L-glutamate. It participates in amino-acid biosynthesis; L-serine biosynthesis; L-serine from 3-phospho-D-glycerate: step 2/3. In terms of biological role, catalyzes the reversible conversion of 3-phosphohydroxypyruvate to phosphoserine and of 3-hydroxy-2-oxo-4-phosphonooxybutanoate to phosphohydroxythreonine. This chain is Phosphoserine aminotransferase, found in Lactococcus lactis subsp. lactis (strain IL1403) (Streptococcus lactis).